We begin with the raw amino-acid sequence, 361 residues long: MNHIKLIDCPIDVTYAINLISDPSCGASSIFIGTTRDSFQGKKVVSLAYEAYENMALKEMDKICSDLRATWPDLKHILIYHRLGTVPENEASVVIAASAPHRSAALKAVTFAIDQLKSRVPIWKKEIYEGNHDAEWKENSESIRPKKSLSSFNYSVCKVDESRVVSRNLVQIRANDCELKNRVECFFKRKRAEINSCNVIDFKQSNLSSNINSDTEVDVSCARTQSTISKQEQSNCHLKVRRATNRCGPQQMQFRPEYKHELSRLTASRVSTNEVGESLQNSRLHSIETYMGLTSKNNENIINRIKNVENRILLLESTSPEYQHFFEQSCMDQPEKKIKTNKTYSAHELRVYIHRKNKECP.

Residues 101–102 (HR), Lys-117, and 124–126 (KKE) contribute to the substrate site.

The protein belongs to the MoaE family. MOCS2B subfamily. As to quaternary structure, heterotetramer; composed of 2 small (Mocs2A) and 2 large (Mocs2B) subunits.

The protein localises to the cytoplasm. The enzyme catalyses 2 [molybdopterin-synthase sulfur-carrier protein]-C-terminal-Gly-aminoethanethioate + cyclic pyranopterin phosphate + H2O = molybdopterin + 2 [molybdopterin-synthase sulfur-carrier protein]-C-terminal Gly-Gly + 2 H(+). The protein operates within cofactor biosynthesis; molybdopterin biosynthesis. Its function is as follows. Catalytic subunit of the molybdopterin synthase complex, a complex that catalyzes the conversion of precursor Z into molybdopterin. Acts by mediating the incorporation of 2 sulfur atoms from thiocarboxylated Mocs2A into precursor Z to generate a dithiolene group. This Drosophila pseudoobscura pseudoobscura (Fruit fly) protein is Molybdopterin synthase catalytic subunit.